Consider the following 660-residue polypeptide: Bifunctional polymyxin resistance protein ArnA (660 aa).

Positions 1–304 (MKAVIFAYHD…TLGLVAGARL (304 aa)) are formyltransferase ArnAFT. H104 (proton donor; for formyltransferase activity) is an active-site residue. (6R)-10-formyltetrahydrofolate-binding positions include R114 and 136 to 140 (VKRAD). A dehydrogenase ArnADH region spans residues 314–660 (RRIRVLILGV…RSVDVAERAS (347 aa)). NAD(+) is bound by residues D347 and 368 to 369 (DI). UDP-alpha-D-glucuronate is bound by residues A393, Y398, and 432–433 (TS). Catalysis depends on E434, which acts as the Proton acceptor; for decarboxylase activity. Residues R460, N492, 526–535 (KLIDGGQQKR), and Y613 contribute to the UDP-alpha-D-glucuronate site. R619 acts as the Proton donor; for decarboxylase activity in catalysis.

This sequence in the N-terminal section; belongs to the Fmt family. UDP-L-Ara4N formyltransferase subfamily. In the C-terminal section; belongs to the NAD(P)-dependent epimerase/dehydratase family. UDP-glucuronic acid decarboxylase subfamily. As to quaternary structure, homohexamer, formed by a dimer of trimers.

The enzyme catalyses UDP-alpha-D-glucuronate + NAD(+) = UDP-beta-L-threo-pentopyranos-4-ulose + CO2 + NADH. It catalyses the reaction UDP-4-amino-4-deoxy-beta-L-arabinose + (6R)-10-formyltetrahydrofolate = UDP-4-deoxy-4-formamido-beta-L-arabinose + (6S)-5,6,7,8-tetrahydrofolate + H(+). The protein operates within nucleotide-sugar biosynthesis; UDP-4-deoxy-4-formamido-beta-L-arabinose biosynthesis; UDP-4-deoxy-4-formamido-beta-L-arabinose from UDP-alpha-D-glucuronate: step 1/3. Its pathway is nucleotide-sugar biosynthesis; UDP-4-deoxy-4-formamido-beta-L-arabinose biosynthesis; UDP-4-deoxy-4-formamido-beta-L-arabinose from UDP-alpha-D-glucuronate: step 3/3. It functions in the pathway bacterial outer membrane biogenesis; lipopolysaccharide biosynthesis. Its function is as follows. Bifunctional enzyme that catalyzes the oxidative decarboxylation of UDP-glucuronic acid (UDP-GlcUA) to UDP-4-keto-arabinose (UDP-Ara4O) and the addition of a formyl group to UDP-4-amino-4-deoxy-L-arabinose (UDP-L-Ara4N) to form UDP-L-4-formamido-arabinose (UDP-L-Ara4FN). The modified arabinose is attached to lipid A and is required for resistance to polymyxin and cationic antimicrobial peptides. The sequence is that of Bifunctional polymyxin resistance protein ArnA from Salmonella choleraesuis (strain SC-B67).